The primary structure comprises 383 residues: UDP-N-acetylglucosamine--N-acetylmuramyl-(pentapeptide) pyrophosphoryl-undecaprenol N-acetylglucosamine transferase (383 aa).

UDP-N-acetyl-alpha-D-glucosamine is bound by residues Thr-10–Gly-12, Asn-124, Arg-165, Ser-190, Ile-245, and Gln-290. Positions Ser-363–Ser-383 are disordered.

This sequence belongs to the glycosyltransferase 28 family. MurG subfamily.

Its subcellular location is the cell inner membrane. It carries out the reaction di-trans,octa-cis-undecaprenyl diphospho-N-acetyl-alpha-D-muramoyl-L-alanyl-D-glutamyl-meso-2,6-diaminopimeloyl-D-alanyl-D-alanine + UDP-N-acetyl-alpha-D-glucosamine = di-trans,octa-cis-undecaprenyl diphospho-[N-acetyl-alpha-D-glucosaminyl-(1-&gt;4)]-N-acetyl-alpha-D-muramoyl-L-alanyl-D-glutamyl-meso-2,6-diaminopimeloyl-D-alanyl-D-alanine + UDP + H(+). It participates in cell wall biogenesis; peptidoglycan biosynthesis. Functionally, cell wall formation. Catalyzes the transfer of a GlcNAc subunit on undecaprenyl-pyrophosphoryl-MurNAc-pentapeptide (lipid intermediate I) to form undecaprenyl-pyrophosphoryl-MurNAc-(pentapeptide)GlcNAc (lipid intermediate II). This is UDP-N-acetylglucosamine--N-acetylmuramyl-(pentapeptide) pyrophosphoryl-undecaprenol N-acetylglucosamine transferase from Anaeromyxobacter dehalogenans (strain 2CP-1 / ATCC BAA-258).